The following is a 405-amino-acid chain: Dynactin subunit 2 (405 aa).

The disordered stretch occupies residues 1–25; sequence MADPKYADLPGIARNEPDVYETSDL. Ala2 is modified (N-acetylalanine). Phosphotyrosine is present on Tyr6. Ser85 is modified (phosphoserine). Phosphotyrosine is present on Tyr88. Residues 105–132 adopt a coiled-coil conformation; sequence YQRLLHEVQELTTEVEKIKMTVKESATE. Thr136 bears the Phosphothreonine mark. Residues 187-207 form a disordered region; sequence KNTKGAGSGGKTTSGSPPDSS. Ser324 is modified (phosphoserine).

Belongs to the dynactin subunit 2 family. Subunit of dynactin, a multiprotein complex part of a tripartite complex with dynein and a adapter, such as BICDL1, BICD2 or HOOK3. The dynactin complex is built around ACTR1A/ACTB filament and consists of an actin-related filament composed of a shoulder domain, a pointed end and a barbed end. Its length is defined by its flexible shoulder domain. The soulder is composed of 2 DCTN1 subunits, 4 DCTN2 and 2 DCTN3. The 4 DCNT2 (via N-terminus) bind the ACTR1A filament and act as molecular rulers to determine the length. The pointed end is important for binding dynein-dynactin cargo adapters and consists of 4 subunits: ACTR10, DCNT4, DCTN5 and DCTN6. The barbed end is composed of a CAPZA1:CAPZB heterodimers, which binds ACTR1A/ACTB filament and dynactin and stabilizes dynactin. Interacts with BICD2 and CEP135. Interacts with DYNAP. Interacts with ECPAS. Interacts with MAPRE1.

It localises to the cytoplasm. The protein resides in the cytoskeleton. Its subcellular location is the microtubule organizing center. The protein localises to the centrosome. It is found in the membrane. Functionally, part of the dynactin complex that activates the molecular motor dynein for ultra-processive transport along microtubules. In the dynactin soulder domain, binds the ACTR1A filament and acts as a molecular ruler to determine the length. Modulates cytoplasmic dynein binding to an organelle, and plays a role in prometaphase chromosome alignment and spindle organization during mitosis. Involved in anchoring microtubules to centrosomes. May play a role in synapse formation during brain development. The sequence is that of Dynactin subunit 2 (DCTN2) from Sus scrofa (Pig).